Here is a 431-residue protein sequence, read N- to C-terminus: Glucose-1-phosphate adenylyltransferase (431 aa).

Residue lysine 39 coordinates beta-D-fructose 1,6-bisphosphate. The AMP site is built by arginine 40, histidine 46, and arginine 52. Tyrosine 114 is an alpha-D-glucose 1-phosphate binding site. AMP is bound at residue arginine 130. Residues glycine 179, 194 to 195 (EK), and serine 212 each bind alpha-D-glucose 1-phosphate. AMP-binding residues include glutamate 370 and arginine 386. Residues 419–423 (REMLR) and 429–431 (QER) each bind beta-D-fructose 1,6-bisphosphate.

Belongs to the bacterial/plant glucose-1-phosphate adenylyltransferase family. Homotetramer.

The catalysed reaction is alpha-D-glucose 1-phosphate + ATP + H(+) = ADP-alpha-D-glucose + diphosphate. It participates in glycan biosynthesis; glycogen biosynthesis. Allosterically activated by fructose-1,6-bisphosphate (F16BP) and inhibited by AMP. Involved in the biosynthesis of ADP-glucose, a building block required for the elongation reactions to produce glycogen. Catalyzes the reaction between ATP and alpha-D-glucose 1-phosphate (G1P) to produce pyrophosphate and ADP-Glc. This is Glucose-1-phosphate adenylyltransferase from Salmonella paratyphi A (strain ATCC 9150 / SARB42).